A 356-amino-acid polypeptide reads, in one-letter code: Protein HEXIM1 (356 aa).

Composition is skewed to basic and acidic residues over residues 1-11 (MAEPLLTEHQH) and 24-47 (VHEE…DSRW). The segment at 1-162 (MAEPLLTEHQ…RPSKKKRHWK (162 aa)) is disordered. Polar residues predominate over residues 48–58 (QSRASLQSGSR). Residues 84 to 93 (SLEKGEKGQN) are compositionally biased toward basic and acidic residues. Phosphoserine is present on residues Ser-98 and Ser-103. Basic residues predominate over residues 145 to 162 (LGKKKHRRRPSKKKRHWK). Residues 147-174 (KKKHRRRPSKKKRHWKPYYKLTWEEKKK) form a basic region; mediates nuclear localization and interaction with 7SK snRNA and NR3C1 region. An interaction with P-TEFb region spans residues 199–202 (PYNT). The interval 207-247 (MDDHDQEEPDLKTGLYPKRAAAKSDDTSDEDFVEEAGEEDG) is autoinhibitory acidic region; in absence of 7SK snRNA interacts with the basic region preventing interaction with P-TEFb and modulating subcellular localization. The disordered stretch occupies residues 210–259 (HDQEEPDLKTGLYPKRAAAKSDDTSDEDFVEEAGEEDGGSDGMGGDGSEF). Position 230 is a phosphoserine (Ser-230). Thr-233 carries the phosphothreonine modification. Positions 233-248 (TSDEDFVEEAGEEDGG) are enriched in acidic residues. Phosphoserine is present on residues Ser-234, Ser-249, and Ser-257. Positions 280 to 346 (SKQELIKEYL…LTENELHRQQ (67 aa)) form a coiled coil. The mediates interaction with CCNT1 stretch occupies residues 283-311 (ELIKEYLELEKCLSRKEDENNRLRLESKR). The tract at residues 307–352 (LESKRLGGVDARVRELELELDRLRAENLQLLTENELHRQQERAPLS) is required for inhibition of ESR1-dependent transcription.

This sequence belongs to the HEXIM family. Homooligomer and heterooligomer with HEXIM2; probably dimeric. Core component of the 7SK RNP complex, at least composed of 7SK RNA, LARP7, MEPCE, HEXIM1 (or HEXIM2) and P-TEFb (composed of CDK9 and CCNT1/cyclin-T1). Interacts with the N-CoR complex through NCOR1. Interacts with ESR1 and NR3C1. May interact with NF-kappa-B through RELA. Interacts with CCNT2; mediates formation of a tripartite complex with KPNA2. Part of the HDP-RNP complex composed of at least HEXIM1, PRKDC, XRCC5, XRCC6, paraspeckle proteins (SFPQ, NONO, PSPC1, RBM14, and MATR3) and NEAT1 non-coding RNA. As to expression, widely expressed with higher expression in heart, skeletal muscle and brain (at protein level).

The protein resides in the nucleus. It localises to the cytoplasm. In terms of biological role, transcriptional regulator which functions as a general RNA polymerase II transcription inhibitor. Core component of the 7SK RNP complex: in cooperation with 7SK snRNA sequesters P-TEFb in a large inactive 7SK snRNP complex preventing RNA polymerase II phosphorylation and subsequent transcriptional elongation. May also regulate NF-kappa-B, ESR1, NR3C1 and CIITA-dependent transcriptional activity. Plays a role in the regulation of DNA virus-mediated innate immune response by assembling into the HDP-RNP complex, a complex that serves as a platform for IRF3 phosphorylation and subsequent innate immune response activation through the cGAS-STING pathway. In Mus musculus (Mouse), this protein is Protein HEXIM1 (Hexim1).